The chain runs to 383 residues: Succinyl-diaminopimelate desuccinylase (383 aa).

Zn(2+) is bound at residue H74. D76 is a catalytic residue. Position 107 (D107) interacts with Zn(2+). Residue E141 is the Proton acceptor of the active site. Residues E142, E170, and H356 each contribute to the Zn(2+) site.

Belongs to the peptidase M20A family. DapE subfamily. As to quaternary structure, homodimer. Requires Zn(2+) as cofactor. Co(2+) is required as a cofactor.

It carries out the reaction N-succinyl-(2S,6S)-2,6-diaminopimelate + H2O = (2S,6S)-2,6-diaminopimelate + succinate. Its pathway is amino-acid biosynthesis; L-lysine biosynthesis via DAP pathway; LL-2,6-diaminopimelate from (S)-tetrahydrodipicolinate (succinylase route): step 3/3. In terms of biological role, catalyzes the hydrolysis of N-succinyl-L,L-diaminopimelic acid (SDAP), forming succinate and LL-2,6-diaminopimelate (DAP), an intermediate involved in the bacterial biosynthesis of lysine and meso-diaminopimelic acid, an essential component of bacterial cell walls. This chain is Succinyl-diaminopimelate desuccinylase, found in Polynucleobacter necessarius subsp. necessarius (strain STIR1).